A 685-amino-acid chain; its full sequence is Methionine--tRNA ligase (685 aa).

A 'HIGH' region motif is present at residues 12–22 (PYANGSIHLGH). Residues Cys-143, Cys-146, Cys-156, and Cys-159 each coordinate Zn(2+). Residues 339 to 343 (KMSKS) carry the 'KMSKS' region motif. Residue Lys-342 coordinates ATP. The tRNA-binding domain occupies 582-685 (DFMKIDMRVA…TGAQPGDKVG (104 aa)).

This sequence belongs to the class-I aminoacyl-tRNA synthetase family. MetG type 1 subfamily. As to quaternary structure, homodimer. Requires Zn(2+) as cofactor.

The protein localises to the cytoplasm. The catalysed reaction is tRNA(Met) + L-methionine + ATP = L-methionyl-tRNA(Met) + AMP + diphosphate. Its function is as follows. Is required not only for elongation of protein synthesis but also for the initiation of all mRNA translation through initiator tRNA(fMet) aminoacylation. The protein is Methionine--tRNA ligase of Neisseria meningitidis serogroup B (strain ATCC BAA-335 / MC58).